Here is a 118-residue protein sequence, read N- to C-terminus: Altered inheritance of mitochondria protein 26, mitochondrial (118 aa).

3 helical membrane-spanning segments follow: residues 7 to 27 (EHLL…AYFF), 41 to 61 (LAVT…SIPA), and 98 to 118 (FLFC…GLSI).

The protein localises to the mitochondrion membrane. In terms of biological role, involved in selective mitochondria autophagy (mitophagy). The protein is Altered inheritance of mitochondria protein 26, mitochondrial (AIM26) of Saccharomyces cerevisiae (strain ATCC 204508 / S288c) (Baker's yeast).